Here is a 142-residue protein sequence, read N- to C-terminus: MKHLIPLIVMASVVLAVYADRGYGGGRRGGGYGGGGYGGGGGGYGGGGGGYGGGVGGGRGGGGGLGGGRGGGGGVIDGKDDVGLGGGGYGGGLGGGQGGGGGLGGGQGGGGGLGGGRGGGGYGGGGGGYGGGKYGGGKYGRK.

The first 19 residues, 1–19 (MKHLIPLIVMASVVLAVYA), serve as a signal peptide directing secretion. Tyr139 bears the Tyrosine amide mark.

In terms of tissue distribution, expressed in hemocytes (at protein level).

It localises to the secreted. Its function is as follows. Antimicrobial protein with bacteriostatic activity against the Gram-negative bacterium E.coli, and very weak activity against the Gram-positive bacterium S.aureus. Lacks activity against the yeast C.albicans. The sequence is that of Ctenidin-3 from Cupiennius salei (American wandering spider).